A 1241-amino-acid chain; its full sequence is ATP-dependent helicase/nuclease subunit A (1241 aa).

In terms of domain architecture, UvrD-like helicase ATP-binding spans 12–485 (SQWTDDQWKA…IDLAKNFRSR (474 aa)). Position 33–40 (33–40 (AAAGSGKT)) interacts with ATP. The 301-residue stretch at 505–805 (GEIDYDADAE…RIMTIHKSKG (301 aa)) folds into the UvrD-like helicase C-terminal domain.

The protein belongs to the helicase family. AddA subfamily. In terms of assembly, heterodimer of AddA and AddB/RexB. Mg(2+) is required as a cofactor.

The enzyme catalyses Couples ATP hydrolysis with the unwinding of duplex DNA by translocating in the 3'-5' direction.. It catalyses the reaction ATP + H2O = ADP + phosphate + H(+). Functionally, the heterodimer acts as both an ATP-dependent DNA helicase and an ATP-dependent, dual-direction single-stranded exonuclease. Recognizes the chi site generating a DNA molecule suitable for the initiation of homologous recombination. The AddA nuclease domain is required for chi fragment generation; this subunit has the helicase and 3' -&gt; 5' nuclease activities. This Bacillus cereus (strain ZK / E33L) protein is ATP-dependent helicase/nuclease subunit A.